A 161-amino-acid polypeptide reads, in one-letter code: Capsid protein (161 aa).

It belongs to the virgaviridae capsid protein family.

It localises to the virion. Functionally, capsid protein self-assembles to form rod-shaped virions about 18 nm in diameter with a central canal enclosing the viral genomic RNA. The sequence is that of Capsid protein (CP) from Tobamovirus Ob.